A 172-amino-acid chain; its full sequence is Arginine repressor (172 aa).

The protein belongs to the ArgR family.

The protein resides in the cytoplasm. It participates in amino-acid biosynthesis; L-arginine biosynthesis [regulation]. Regulates arginine biosynthesis genes. The sequence is that of Arginine repressor from Bifidobacterium adolescentis (strain ATCC 15703 / DSM 20083 / NCTC 11814 / E194a).